A 292-amino-acid polypeptide reads, in one-letter code: Elongation factor Ts (292 aa).

An involved in Mg(2+) ion dislocation from EF-Tu region spans residues 82–85 (TDFV).

The protein belongs to the EF-Ts family.

It is found in the cytoplasm. Associates with the EF-Tu.GDP complex and induces the exchange of GDP to GTP. It remains bound to the aminoacyl-tRNA.EF-Tu.GTP complex up to the GTP hydrolysis stage on the ribosome. The protein is Elongation factor Ts of Bordetella avium (strain 197N).